The following is a 238-amino-acid chain: Ribonuclease PH (238 aa).

Phosphate contacts are provided by residues Arg-87 and 125–127 (GTR).

This sequence belongs to the RNase PH family. Homohexameric ring arranged as a trimer of dimers.

The catalysed reaction is tRNA(n+1) + phosphate = tRNA(n) + a ribonucleoside 5'-diphosphate. In terms of biological role, phosphorolytic 3'-5' exoribonuclease that plays an important role in tRNA 3'-end maturation. Removes nucleotide residues following the 3'-CCA terminus of tRNAs; can also add nucleotides to the ends of RNA molecules by using nucleoside diphosphates as substrates, but this may not be physiologically important. Probably plays a role in initiation of 16S rRNA degradation (leading to ribosome degradation) during starvation. This is Ribonuclease PH from Synechococcus elongatus (strain ATCC 33912 / PCC 7942 / FACHB-805) (Anacystis nidulans R2).